We begin with the raw amino-acid sequence, 78 residues long: MTLFSSITSISKTNTSSKSSVNSLSGSSLSMGSNSVACGGCDKPAAGAAILANIDIKAKVDLSLSAAAAASAKCGACH.

Positions 1–32 (MTLFSSITSISKTNTSSKSSVNSLSGSSLSMG) are disordered.

The protein belongs to the hssA/B family.

This Dictyostelium discoideum (Social amoeba) protein is HssA/B-like protein 30 (hssl30).